A 552-amino-acid polypeptide reads, in one-letter code: Small ribosomal subunit protein bS1 (552 aa).

S1 motif domains are found at residues 31–101 (TIKE…ISQQ), 116–179 (NAII…ISRK), 200–268 (TEPV…LSIK), 285–355 (GYAI…VSLK), 372–440 (GDIV…LSAK), and 457–521 (DSVI…ASVH).

It belongs to the bacterial ribosomal protein bS1 family.

Functionally, binds mRNA; thus facilitating recognition of the initiation point. It is needed to translate mRNA with a short Shine-Dalgarno (SD) purine-rich sequence. The sequence is that of Small ribosomal subunit protein bS1 (rpsA) from Helicobacter pylori (strain J99 / ATCC 700824) (Campylobacter pylori J99).